Reading from the N-terminus, the 472-residue chain is MSAAKLNVKTSSKPNSRIAVEVEVPANRCKNSYDEALSKLSRSISIPGFRKGKVPKTVVIQQLGVKRIQASALESLLQKVWTETLDQEGIEPLCEPELEDGFETILENFNPEKTLILKLETDITPIPTLKKSSGLTAEVENLIFDPKKVDELIEQSRAQLATKVPVTDRAAQKGDIALVSFKGSFSDDGSEIEGGSADSIEIELEQGRMIPGFIEGVIGMNINDEKILKCEFPKDYHQEEAKGRKAEFNVSLEDLKIKELPELNDEFAKQASDKENMSDLRADLEKRLKEDNDRKQAKTRQDSLLDVLVKELEVDIPKSLIDQEVRIIVEQTAQNFAQQGIDVKSMFTPELVKSLMESSKGEAEKKLRQKFALKALAKSEKIEVSDKEINSKLEQVEADIKLSNEKNIDAKRLKEAITDDLLQEKLFAWLEENNTVVEKPPEKARDQIKEKSSKKKTTKTNKEKKSSKTPKS.

Residues 174-261 (GDIALVSFKG…LEDLKIKELP (88 aa)) enclose the PPIase FKBP-type domain. Residues 433-472 (NNTVVEKPPEKARDQIKEKSSKKKTTKTNKEKKSSKTPKS) form a disordered region. Basic and acidic residues predominate over residues 439–451 (KPPEKARDQIKEK).

Belongs to the FKBP-type PPIase family. Tig subfamily.

The protein localises to the cytoplasm. It carries out the reaction [protein]-peptidylproline (omega=180) = [protein]-peptidylproline (omega=0). Its function is as follows. Involved in protein export. Acts as a chaperone by maintaining the newly synthesized protein in an open conformation. Functions as a peptidyl-prolyl cis-trans isomerase. This is Trigger factor from Prochlorococcus marinus (strain NATL1A).